The chain runs to 419 residues: L-rhamnose isomerase (419 aa).

H262, D294, and D296 together coordinate Mn(2+).

It belongs to the rhamnose isomerase family. Homotetramer. Mn(2+) serves as cofactor.

It localises to the cytoplasm. It catalyses the reaction L-rhamnopyranose = L-rhamnulose. The protein operates within carbohydrate degradation; L-rhamnose degradation; glycerone phosphate from L-rhamnose: step 1/3. Its function is as follows. Catalyzes the interconversion of L-rhamnose and L-rhamnulose. In Shigella sonnei (strain Ss046), this protein is L-rhamnose isomerase.